The sequence spans 312 residues: Acetylglutamate kinase (312 aa).

Residues 77–78, Arg99, and Asn192 each bind substrate; that span reads GG.

Belongs to the acetylglutamate kinase family. ArgB subfamily.

It localises to the cytoplasm. The enzyme catalyses N-acetyl-L-glutamate + ATP = N-acetyl-L-glutamyl 5-phosphate + ADP. Its pathway is amino-acid biosynthesis; L-arginine biosynthesis; N(2)-acetyl-L-ornithine from L-glutamate: step 2/4. In terms of biological role, catalyzes the ATP-dependent phosphorylation of N-acetyl-L-glutamate. This Synechococcus sp. (strain JA-2-3B'a(2-13)) (Cyanobacteria bacterium Yellowstone B-Prime) protein is Acetylglutamate kinase.